The primary structure comprises 419 residues: Multifunctional CCA protein (419 aa).

The ATP site is built by glycine 8 and arginine 11. Residues glycine 8 and arginine 11 each contribute to the CTP site. Mg(2+) is bound by residues aspartate 21 and aspartate 23. ATP is bound by residues arginine 91, arginine 137, and arginine 140. The CTP site is built by arginine 91, arginine 137, and arginine 140. In terms of domain architecture, HD spans 226–327 (TGVHLMMVLD…VRLFDRCDAW (102 aa)).

This sequence belongs to the tRNA nucleotidyltransferase/poly(A) polymerase family. Bacterial CCA-adding enzyme type 1 subfamily. In terms of assembly, monomer. Can also form homodimers and oligomers. Requires Mg(2+) as cofactor. Ni(2+) is required as a cofactor.

It carries out the reaction a tRNA precursor + 2 CTP + ATP = a tRNA with a 3' CCA end + 3 diphosphate. The enzyme catalyses a tRNA with a 3' CCA end + 2 CTP + ATP = a tRNA with a 3' CCACCA end + 3 diphosphate. Catalyzes the addition and repair of the essential 3'-terminal CCA sequence in tRNAs without using a nucleic acid template. Adds these three nucleotides in the order of C, C, and A to the tRNA nucleotide-73, using CTP and ATP as substrates and producing inorganic pyrophosphate. tRNA 3'-terminal CCA addition is required both for tRNA processing and repair. Also involved in tRNA surveillance by mediating tandem CCA addition to generate a CCACCA at the 3' terminus of unstable tRNAs. While stable tRNAs receive only 3'-terminal CCA, unstable tRNAs are marked with CCACCA and rapidly degraded. The chain is Multifunctional CCA protein from Leptothrix cholodnii (strain ATCC 51168 / LMG 8142 / SP-6) (Leptothrix discophora (strain SP-6)).